Here is a 164-residue protein sequence, read N- to C-terminus: MAIPRRSLTELDQNAAGAHFLIVEARYYDSIGAMLLAGAKAALERARASHELVSVPGALEIPIAIEIATDQAKRAGAPFAGAVALGCVIRGETYHFEIVAAESARALMQLAVAHKLPLGNGILTVDTEAQAEERADPDRGDKGGDAARAAVALHCLARRAGALS.

5-amino-6-(D-ribitylamino)uracil-binding positions include tyrosine 27, 58–60 (ALE), and 87–89 (CVI). 92–93 (ET) is a (2S)-2-hydroxy-3-oxobutyl phosphate binding site. Residue histidine 95 is the Proton donor of the active site. Residue asparagine 120 participates in 5-amino-6-(D-ribitylamino)uracil binding. Arginine 134 is a binding site for (2S)-2-hydroxy-3-oxobutyl phosphate.

The protein belongs to the DMRL synthase family.

It catalyses the reaction (2S)-2-hydroxy-3-oxobutyl phosphate + 5-amino-6-(D-ribitylamino)uracil = 6,7-dimethyl-8-(1-D-ribityl)lumazine + phosphate + 2 H2O + H(+). It participates in cofactor biosynthesis; riboflavin biosynthesis; riboflavin from 2-hydroxy-3-oxobutyl phosphate and 5-amino-6-(D-ribitylamino)uracil: step 1/2. Catalyzes the formation of 6,7-dimethyl-8-ribityllumazine by condensation of 5-amino-6-(D-ribitylamino)uracil with 3,4-dihydroxy-2-butanone 4-phosphate. This is the penultimate step in the biosynthesis of riboflavin. In Methylocella silvestris (strain DSM 15510 / CIP 108128 / LMG 27833 / NCIMB 13906 / BL2), this protein is 6,7-dimethyl-8-ribityllumazine synthase.